The sequence spans 425 residues: Putative integrase/recombinase y4rF (425 aa).

The 88-residue stretch at 123-210 (DPDALLLASF…HIRTFLRFLC (88 aa)) folds into the Core-binding (CB) domain. The region spanning 233–418 (HLPPRLAWGD…AASQLAEVAL (186 aa)) is the Tyr recombinase domain. Catalysis depends on residues R273, K298, H370, R373, and H396. Y405 (O-(3'-phospho-DNA)-tyrosine intermediate) is an active-site residue.

This sequence belongs to the 'phage' integrase family.

The sequence is that of Putative integrase/recombinase y4rF from Sinorhizobium fredii (strain NBRC 101917 / NGR234).